Here is a 236-residue protein sequence, read N- to C-terminus: 1-(5-phosphoribosyl)-5-[(5-phosphoribosylamino)methylideneamino] imidazole-4-carboxamide isomerase (236 aa).

Residue D8 is the Proton acceptor of the active site. D128 functions as the Proton donor in the catalytic mechanism.

It belongs to the HisA/HisF family.

The protein resides in the cytoplasm. The catalysed reaction is 1-(5-phospho-beta-D-ribosyl)-5-[(5-phospho-beta-D-ribosylamino)methylideneamino]imidazole-4-carboxamide = 5-[(5-phospho-1-deoxy-D-ribulos-1-ylimino)methylamino]-1-(5-phospho-beta-D-ribosyl)imidazole-4-carboxamide. The protein operates within amino-acid biosynthesis; L-histidine biosynthesis; L-histidine from 5-phospho-alpha-D-ribose 1-diphosphate: step 4/9. The chain is 1-(5-phosphoribosyl)-5-[(5-phosphoribosylamino)methylideneamino] imidazole-4-carboxamide isomerase from Nitrosopumilus maritimus (strain SCM1).